The chain runs to 269 residues: Regulatory protein RecX (269 aa).

This sequence belongs to the RecX family.

It localises to the cytoplasm. In terms of biological role, modulates RecA activity. This chain is Regulatory protein RecX, found in Lactococcus lactis subsp. cremoris (strain MG1363).